We begin with the raw amino-acid sequence, 428 residues long: GTPase Obg (428 aa).

Residues 1 to 158 enclose the Obg domain; sequence MFVDQVKVYV…RYIVLELKVL (158 aa). Positions 117–143 are disordered; it reads AKGGRGGRGNTRFATPANPAPQLSEHG. Residues 159–329 enclose the OBG-type G domain; the sequence is ADVGLVGFPS…LLFEVANQLE (171 aa). Residues 165 to 172, 190 to 194, 212 to 215, 282 to 285, and 310 to 312 contribute to the GTP site; these read GFPSVGKS, FTTLV, DLPG, NKMD, and SAV. Ser172 and Thr192 together coordinate Mg(2+). The OCT domain maps to 350 to 428; that stretch reads TMEDEEIPFN…LLEFEFEFID (79 aa).

It belongs to the TRAFAC class OBG-HflX-like GTPase superfamily. OBG GTPase family. As to quaternary structure, monomer. Mg(2+) serves as cofactor.

It localises to the cytoplasm. An essential GTPase which binds GTP, GDP and possibly (p)ppGpp with moderate affinity, with high nucleotide exchange rates and a fairly low GTP hydrolysis rate. Plays a role in control of the cell cycle, stress response, ribosome biogenesis and in those bacteria that undergo differentiation, in morphogenesis control. This chain is GTPase Obg, found in Bacillus velezensis (strain DSM 23117 / BGSC 10A6 / LMG 26770 / FZB42) (Bacillus amyloliquefaciens subsp. plantarum).